We begin with the raw amino-acid sequence, 146 residues long: Prepilin peptidase-dependent protein D (146 aa).

A propeptide spans 1–6 (MDKQRG) (leader sequence). N-methylphenylalanine is present on phenylalanine 7. The chain crosses the membrane as a helical span at residues 7-27 (FTLIELMVVIGIIAILSAIGI).

The protein belongs to the N-Me-Phe pilin family.

It is found in the fimbrium. Its subcellular location is the membrane. Functionally, major component of the type IV pilus (T4P) that plays a role in cell adhesion and motility. Not produced when grown under standard laboratory conditions. The chain is Prepilin peptidase-dependent protein D (ppdD) from Escherichia coli (strain K12).